Here is a 375-residue protein sequence, read N- to C-terminus: MDIEERINLVLKKPTEEVLTVENLRHLFEVGAPLQHYIGFEISGYIHLGTGLMAGAKIADFQKAGIKTRIFLADWHSWINDKLGGDLEVIQEVALKYFKVGMEKSIEVMGGDPKKVEFVLASEILENGDYWQTVIDISKNVTLSRVMRSITIMGRQMGESIDFAKLIYPMMQVADIFYQGVTIAHAGMDQRKAHVIAIEVAQKLKYHPIVHNGEKLKPVAVHHHLLLGLQEPPVWPITSEEQFKEIKAQMKMSKSKPYSAVFIHDSPEEIKQKLRKAFCPAREVNYNPVLDWAEHIIFREEPTEFTIHRPAKFGGDVTYTTFEELKKDFAEGKLHPLDLKNAVAEYLIELLKPIREYFERHPEPLELMRSVKITR.

5 residues coordinate L-tyrosine: Tyr37, Tyr168, Gln172, Asp175, and Gln190. Residues 251–255 carry the 'KMSKS' region motif; that stretch reads KMSKS. Residue Lys254 participates in ATP binding.

This sequence belongs to the class-I aminoacyl-tRNA synthetase family. TyrS type 4 subfamily. Homodimer.

It is found in the cytoplasm. The enzyme catalyses tRNA(Tyr) + L-tyrosine + ATP = L-tyrosyl-tRNA(Tyr) + AMP + diphosphate + H(+). Its function is as follows. Catalyzes the attachment of tyrosine to tRNA(Tyr) in a two-step reaction: tyrosine is first activated by ATP to form Tyr-AMP and then transferred to the acceptor end of tRNA(Tyr). The polypeptide is Tyrosine--tRNA ligase (Pyrococcus abyssi (strain GE5 / Orsay)).